A 216-amino-acid chain; its full sequence is NKG2-D type II integral membrane protein (216 aa).

Topologically, residues 1-51 (MGWIRGRRSRHSWEMSEFHNYNLDLAKNDFSTRWQKQRCPVIKSKCRENTS) are cytoplasmic. The helical; Signal-anchor for type II membrane protein transmembrane segment at 52-72 (PLFFCCFIAVAMGIRFIVMVT) threads the bilayer. At 73–216 (IWSAVFLNSL…NTYICMQRTV (144 aa)) the chain is on the extracellular side. 2 cysteine pairs are disulfide-bonded: Cys-96-Cys-105 and Cys-99-Cys-110. The C-type lectin domain maps to 98–213 (PCPKNWICYK…STPNTYICMQ (116 aa)). N-linked (GlcNAc...) asparagine glycans are attached at residues Asn-115, Asn-131, Asn-163, and Asn-202. Intrachain disulfides connect Cys-127/Cys-211 and Cys-189/Cys-203.

Homodimer; disulfide-linked. Heterohexamer composed of two subunits of KLRK1 and four subunits of HCST/DAP10. Interacts (via transmembrane domain) with HCST/DAP10 (via transmembrane domain); the interaction is required for KLRK1 NK cell surface and induces NK cell-mediated cytotoxicity. Can form disulfide-bonded heterodimer with CD94. Interacts with CEACAM1; recruits PTPN6 that dephosphorylates VAV1.

The protein localises to the cell membrane. Its function is as follows. Functions as an activating and costimulatory receptor involved in immunosurveillance upon binding to various cellular stress-inducible ligands displayed at the surface of autologous tumor cells and virus-infected cells. Provides both stimulatory and costimulatory innate immune responses on activated killer (NK) cells, leading to cytotoxic activity. Acts as a costimulatory receptor for T-cell receptor (TCR) in CD8(+) T-cell-mediated adaptive immune responses by amplifying T-cell activation. Stimulates perforin-mediated elimination of ligand-expressing tumor cells. Signaling involves calcium influx, culminating in the expression of TNF-alpha. Participates in NK cell-mediated bone marrow graft rejection. May play a regulatory role in differentiation and survival of NK cells. Binds to ligands belonging to various subfamilies of MHC class I-related glycoproteins. The sequence is that of NKG2-D type II integral membrane protein (KLRK1) from Pongo pygmaeus (Bornean orangutan).